Reading from the N-terminus, the 87-residue chain is Small ribosomal subunit protein bS20 (87 aa).

Residues 1 to 26 (MANIKSAQKRAVQSEKRRQHNASQRS) form a disordered region.

The protein belongs to the bacterial ribosomal protein bS20 family.

Its function is as follows. Binds directly to 16S ribosomal RNA. The sequence is that of Small ribosomal subunit protein bS20 from Glaesserella parasuis serovar 5 (strain SH0165) (Haemophilus parasuis).